We begin with the raw amino-acid sequence, 251 residues long: Coproheme decarboxylase (251 aa).

Residues Arg-133, 147–151 (YPMSK), His-174, Gln-187, and Ser-225 each bind Fe-coproporphyrin III. Tyr-147 is an active-site residue.

The protein belongs to the ChdC family. Type 1 subfamily. It depends on Fe-coproporphyrin III as a cofactor.

The catalysed reaction is Fe-coproporphyrin III + 2 H2O2 + 2 H(+) = heme b + 2 CO2 + 4 H2O. The enzyme catalyses Fe-coproporphyrin III + H2O2 + H(+) = harderoheme III + CO2 + 2 H2O. It catalyses the reaction harderoheme III + H2O2 + H(+) = heme b + CO2 + 2 H2O. It participates in porphyrin-containing compound metabolism; protoheme biosynthesis. In terms of biological role, involved in coproporphyrin-dependent heme b biosynthesis. Catalyzes the decarboxylation of Fe-coproporphyrin III (coproheme) to heme b (protoheme IX), the last step of the pathway. The reaction occurs in a stepwise manner with a three-propionate intermediate. This Listeria monocytogenes serotype 4a (strain HCC23) protein is Coproheme decarboxylase.